Consider the following 162-residue polypeptide: Peptidyl-prolyl cis-trans isomerase-like 1 (162 aa).

In terms of domain architecture, PPIase cyclophilin-type spans 1-155 (MATDVTFDTS…DEVKILRAKV (155 aa)).

The protein belongs to the cyclophilin-type PPIase family. PPIL1 subfamily.

It catalyses the reaction [protein]-peptidylproline (omega=180) = [protein]-peptidylproline (omega=0). Functionally, PPIases accelerate the folding of proteins. It catalyzes the cis-trans isomerization of proline imidic peptide bonds in oligopeptides. The polypeptide is Peptidyl-prolyl cis-trans isomerase-like 1 (cyp1) (Emericella nidulans (strain FGSC A4 / ATCC 38163 / CBS 112.46 / NRRL 194 / M139) (Aspergillus nidulans)).